A 410-amino-acid chain; its full sequence is Serine hydroxymethyltransferase (410 aa).

Residues L116 and G120 to L122 contribute to the (6S)-5,6,7,8-tetrahydrofolate site. An N6-(pyridoxal phosphate)lysine modification is found at K225.

The protein belongs to the SHMT family. In terms of assembly, homodimer. It depends on pyridoxal 5'-phosphate as a cofactor.

The protein resides in the cytoplasm. It carries out the reaction (6R)-5,10-methylene-5,6,7,8-tetrahydrofolate + glycine + H2O = (6S)-5,6,7,8-tetrahydrofolate + L-serine. The protein operates within one-carbon metabolism; tetrahydrofolate interconversion. Its pathway is amino-acid biosynthesis; glycine biosynthesis; glycine from L-serine: step 1/1. Its function is as follows. Catalyzes the reversible interconversion of serine and glycine with tetrahydrofolate (THF) serving as the one-carbon carrier. This reaction serves as the major source of one-carbon groups required for the biosynthesis of purines, thymidylate, methionine, and other important biomolecules. Also exhibits THF-independent aldolase activity toward beta-hydroxyamino acids, producing glycine and aldehydes, via a retro-aldol mechanism. The polypeptide is Serine hydroxymethyltransferase (Lacticaseibacillus casei (strain BL23) (Lactobacillus casei)).